The sequence spans 789 residues: Transducer protein Htr6 (789 aa).

Transmembrane regions (helical) follow at residues 29–49 (FAVA…FAFQ) and 294–314 (TVTV…IALG). 2 consecutive HAMP domains span residues 315-367 (RHTV…DRIQ) and 409-462 (ERLQ…ATIA). A Methyl-accepting transducer domain is found at 481-717 (GAEEIETTSQ…SVVRRVDDVA (237 aa)). The interval 763–789 (NQFETRADADEPDADTTVDASADDTGD) is disordered. The segment covering 772–789 (DEPDADTTVDASADDTGD) has biased composition (acidic residues).

It belongs to the methyl-accepting chemotaxis (MCP) protein family. Methylated by CheR.

Its subcellular location is the cell membrane. Functionally, potentially involved in chemo- or phototactic signal transduction. This is Transducer protein Htr6 (htr6) from Halobacterium salinarum (strain ATCC 29341 / DSM 671 / R1).